The sequence spans 468 residues: Mitochondrial adenyl nucleotide antiporter SLC25A23 (468 aa).

A regulatory N-terminal domain region spans residues 1–149 (MRGSPGDAER…DHFLLHSLEN (149 aa)). Residues 1-188 (MRGSPGDAER…EKLTGMWWKQ (188 aa)) lie on the Mitochondrial intermembrane side of the membrane. An EF-hand 1 domain is found at 9–44 (ERRQRWGRLFEELDSNKDGRVDVHELRQGLARLGGG). The Ca(2+) site is built by Asp-22, Asn-24, Asp-26, Arg-28, and Glu-33. Residues 34–67 (LRQGLARLGGGNPDPGAQQGISSEGDADPDGGLD) form a disordered region. Residues 58-67 (GDADPDGGLD) show a composition bias toward acidic residues. EF-hand domains follow at residues 77-112 (EREQRLLLMFHSLDRNQDGHIDVSEIQQSFRALGIS) and 113-148 (ISLEQAEKILHSMDRDGTMTIDWQEWRDHFLLHSLE). 5 residues coordinate Ca(2+): Asp-90, Asn-92, Asp-94, His-96, and Glu-101. The segment at 150–159 (VEDVLYFWKH) is linker region. The interval 165-468 (IGECLTVPDE…MKQALGVTSR (304 aa)) is C-terminal transmembrane transporter domain. 3 Solcar repeats span residues 183-269 (GMWW…IKRA), 277-362 (LHVQ…LKNW), and 374-462 (PGIL…MKQA). The helical transmembrane segment at 189–206 (LVAGAVAGAVSRTGTAPL) threads the bilayer. Topologically, residues 207–243 (DRLKVFMQVHASKTNRLNILGGLRSMVLEGGIRSLWR) are mitochondrial matrix. Residues 244-263 (GNGINVLKIAPESAIKFMAY) traverse the membrane as a helical segment. At 264–286 (EQIKRAILGQQETLHVQERFVAG) the chain is on the mitochondrial intermembrane side. Residues 287 to 300 (SLAGATAQTIIYPM) traverse the membrane as a helical segment. Residues 301-336 (EVLKTRLTLRRTGQYKGLLDCARRILEREGPRAFYR) lie on the Mitochondrial matrix side of the membrane. Residues 337–356 (GYLPNVLGIIPYAGIDLAVY) traverse the membrane as a helical segment. At 357 to 379 (ETLKNWWLQQYSHDSADPGILVL) the chain is on the mitochondrial intermembrane side. A helical transmembrane segment spans residues 380–397 (LACGTISSTCGQIASYPL). The Mitochondrial matrix segment spans residues 398–436 (ALVRTRMQAQASIEGGPQLSMLGLLRHILSQEGMRGLYR). A helical membrane pass occupies residues 437 to 456 (GIAPNFMKVIPAVSISYVVY). Residues 457–468 (ENMKQALGVTSR) lie on the Mitochondrial intermembrane side of the membrane.

This sequence belongs to the mitochondrial carrier (TC 2.A.29) family. In terms of assembly, interacts with MCU. Interacts with MICU1. As to expression, expressed at low levels in most tissues examined, with highest expression in brain, skeletal muscle and pancreas.

It localises to the mitochondrion inner membrane. The catalysed reaction is Mg(2+)(out) + phosphate(in) + ATP(out) = Mg(2+)(in) + phosphate(out) + ATP(in). The enzyme catalyses ADP(out) + phosphate(in) + H(+)(out) = ADP(in) + phosphate(out) + H(+)(in). It catalyses the reaction AMP(out) + phosphate(in) = AMP(in) + phosphate(out). It carries out the reaction phosphate(in) + ATP(out) + 2 H(+)(out) = phosphate(out) + ATP(in) + 2 H(+)(in). The catalysed reaction is dADP(in) + ADP(out) = dADP(out) + ADP(in). The enzyme catalyses Mg(2+)(in) + ADP(out) + ATP(in) + H(+)(out) = Mg(2+)(out) + ADP(in) + ATP(out) + H(+)(in). It catalyses the reaction ADP(out) + diphosphate(in) = ADP(in) + diphosphate(out). It carries out the reaction dAMP(in) + ADP(out) + H(+)(out) = dAMP(out) + ADP(in) + H(+)(in). The catalysed reaction is 3'-AMP(in) + ADP(out) + H(+)(out) = 3'-AMP(out) + ADP(in) + H(+)(in). The enzyme catalyses dAMP(out) + phosphate(in) = dAMP(in) + phosphate(out). It catalyses the reaction 3'-AMP(out) + phosphate(in) = 3'-AMP(in) + phosphate(out). It carries out the reaction dADP(out) + phosphate(in) + H(+)(out) = dADP(in) + phosphate(out) + H(+)(in). Activated by an increase in cytosolic calcium levels that induce a conformational change of the N-terminal regulatory domain, uncapping the channel and allowing transport. Inhibited by bathophenanthroline, mersalyl, p-hydroxymercuribenzoate, bromcresol purple, tannic acid, pyridoxal 5'-phosphate and p-hydroxymercuribenzoate. Functionally, electroneutral antiporter that mediates the transport of adenine nucleotides through the inner mitochondrial membrane. Originally identified as an ATP-magnesium/inorganic phosphate antiporter, it also acts as a broad specificity adenyl nucleotide antiporter. By regulating the mitochondrial matrix adenine nucleotide pool could adapt to changing cellular energetic demands and indirectly regulate adenine nucleotide-dependent metabolic pathways. Also acts as a regulator of mitochondrial calcium uptake and can probably transport trace amounts of other divalent metal cations in complex with ATP. In vitro, a low activity is also observed with guanyl and pyrimidine nucleotides. This chain is Mitochondrial adenyl nucleotide antiporter SLC25A23, found in Homo sapiens (Human).